The following is a 200-amino-acid chain: Phosphatidylethanolamine N-methyltransferase B (200 aa).

Over 1–8 (MEKGLSSD) the chain is Lumenal. Residues 9-29 (LIIAFVAIVLHVVNYNVTAQF) constitute an intramembrane region (helical). Residues 30-39 (EYKTRYFTKL) are Lumenal-facing. Residues 40-58 (IGRNAIYYYAVFLIISALI) form a helical membrane-spanning segment. At 59–86 (RDHFINVAVLSDKDSIILFPTEIANMIG) the chain is on the cytoplasmic side. A helical membrane pass occupies residues 87 to 107 (DSCFIFGILLNIWTLKALGIK). An S-adenosyl-L-methionine-binding site is contributed by 91-93 (IFG). The Lumenal portion of the chain corresponds to 108-150 (GMYNGDSFGHIMDSPVTGGPYQFFSDPQYVGTTIAALGVAIRN). The helical transmembrane segment at 151–171 (QSIYGFLCTILVGVVFYISAT) threads the bilayer. The Cytoplasmic portion of the chain corresponds to 172–200 (FVETPHLKNIYSNRSYSKINFKNLKSLKN). 174-175 (ET) provides a ligand contact to S-adenosyl-L-methionine.

It belongs to the class VI-like SAM-binding methyltransferase superfamily. PEMT/PEM2 methyltransferase family.

The protein resides in the endoplasmic reticulum membrane. It is found in the mitochondrion membrane. The catalysed reaction is a 1,2-diacyl-sn-glycero-3-phospho-N-methylethanolamine + S-adenosyl-L-methionine = a 1,2-diacyl-sn-glycero-3-phospho-N,N-dimethylethanolamine + S-adenosyl-L-homocysteine + H(+). The enzyme catalyses a 1,2-diacyl-sn-glycero-3-phospho-N,N-dimethylethanolamine + S-adenosyl-L-methionine = a 1,2-diacyl-sn-glycero-3-phosphocholine + S-adenosyl-L-homocysteine + H(+). It carries out the reaction a 1,2-diacyl-sn-glycero-3-phosphoethanolamine + S-adenosyl-L-methionine = a 1,2-diacyl-sn-glycero-3-phospho-N-methylethanolamine + S-adenosyl-L-homocysteine + H(+). It participates in phospholipid metabolism; phosphatidylcholine biosynthesis. Functionally, catalyzes the three sequential steps of the methylation pathway of phosphatidylcholine biosynthesis, the SAM-dependent methylation of phosphatidylethanolamine (PE) to phosphatidylmonomethylethanolamine (PMME), PMME to phosphatidyldimethylethanolamine (PDME), and PDME to phosphatidylcholine (PC). The polypeptide is Phosphatidylethanolamine N-methyltransferase B (pemtB) (Dictyostelium discoideum (Social amoeba)).